Consider the following 316-residue polypeptide: Dehydrogenase/reductase SDR family protein 7-like (316 aa).

The Cytoplasmic portion of the chain corresponds to 1-18 (MFFYKIIYFIGFPYIVLR). A helical; Signal-anchor for type II membrane protein membrane pass occupies residues 19–39 (LIVSIILPIASLYFIYCNFIA). Residues 40 to 316 (PKLREKPESS…HKFASSSVKK (277 aa)) lie on the Peroxisomal side of the membrane. 56–80 (IITGASSGIGAELAKKYARLGCKVT) contributes to the NAD(+) binding site. Substrate is bound at residue Ser194. Residue Tyr207 is the Proton acceptor of the active site.

The protein belongs to the short-chain dehydrogenases/reductases (SDR) family.

Its subcellular location is the peroxisome membrane. Functionally, putative oxidoreductase. The polypeptide is Dehydrogenase/reductase SDR family protein 7-like (Dictyostelium discoideum (Social amoeba)).